The sequence spans 76 residues: Small ribosomal subunit protein uS17 (76 aa).

It belongs to the universal ribosomal protein uS17 family. As to quaternary structure, part of the 30S ribosomal subunit.

In terms of biological role, one of the primary rRNA binding proteins, it binds specifically to the 5'-end of 16S ribosomal RNA. In Ruegeria pomeroyi (strain ATCC 700808 / DSM 15171 / DSS-3) (Silicibacter pomeroyi), this protein is Small ribosomal subunit protein uS17.